The primary structure comprises 108 residues: Large ribosomal subunit protein uL11 (108 aa).

Belongs to the universal ribosomal protein uL11 family. Part of the ribosomal stalk of the 50S ribosomal subunit. Interacts with L10 and the large rRNA to form the base of the stalk. L10 forms an elongated spine to which L12 dimers bind in a sequential fashion forming a multimeric L10(L12)X complex.

In terms of biological role, forms part of the ribosomal stalk which helps the ribosome interact with GTP-bound translation factors. The chain is Large ribosomal subunit protein uL11 (rpl11) from Aeropyrum pernix (strain ATCC 700893 / DSM 11879 / JCM 9820 / NBRC 100138 / K1).